The sequence spans 132 residues: Small ribosomal subunit protein uS8 (132 aa).

Belongs to the universal ribosomal protein uS8 family. In terms of assembly, part of the 30S ribosomal subunit. Contacts proteins S5 and S12.

Functionally, one of the primary rRNA binding proteins, it binds directly to 16S rRNA central domain where it helps coordinate assembly of the platform of the 30S subunit. This Nitrobacter winogradskyi (strain ATCC 25391 / DSM 10237 / CIP 104748 / NCIMB 11846 / Nb-255) protein is Small ribosomal subunit protein uS8.